A 592-amino-acid polypeptide reads, in one-letter code: Proline--tRNA ligase (592 aa).

This sequence belongs to the class-II aminoacyl-tRNA synthetase family. ProS type 1 subfamily. Homodimer.

It is found in the cytoplasm. The catalysed reaction is tRNA(Pro) + L-proline + ATP = L-prolyl-tRNA(Pro) + AMP + diphosphate. Its function is as follows. Catalyzes the attachment of proline to tRNA(Pro) in a two-step reaction: proline is first activated by ATP to form Pro-AMP and then transferred to the acceptor end of tRNA(Pro). As ProRS can inadvertently accommodate and process non-cognate amino acids such as alanine and cysteine, to avoid such errors it has two additional distinct editing activities against alanine. One activity is designated as 'pretransfer' editing and involves the tRNA(Pro)-independent hydrolysis of activated Ala-AMP. The other activity is designated 'posttransfer' editing and involves deacylation of mischarged Ala-tRNA(Pro). The misacylated Cys-tRNA(Pro) is not edited by ProRS. The polypeptide is Proline--tRNA ligase (Corynebacterium urealyticum (strain ATCC 43042 / DSM 7109)).